The chain runs to 219 residues: UPF0126 membrane protein SCO5481 (219 aa).

Helical transmembrane passes span 10–30 (VQHTLDLVGIFVFAISGALLA), 34–54 (NFDVFGIAVLAEVTALGGGLF), 66–86 (AFTDLGYFLTPLLATLLVFFL), 93–113 (LQTGVNIFDAAGLGLFCVAGT), 120–140 (GLGLTASACLGLTTAVGGGVL), and 158–178 (LYAVPAIVGSAMVALCIRYEA).

The protein belongs to the UPF0126 family.

Its subcellular location is the cell membrane. The sequence is that of UPF0126 membrane protein SCO5481 from Streptomyces coelicolor (strain ATCC BAA-471 / A3(2) / M145).